The following is a 207-amino-acid chain: Cytochrome c oxidase subunit 3 (207 aa).

Helical transmembrane passes span 30–50 (FWLF…TFLA), 67–87 (VTLV…SVYA), 101–121 (LWLG…IYEF), 144–164 (LVGT…TLMI), and 186–206 (WHFI…MGMV).

The protein belongs to the cytochrome c oxidase subunit 3 family.

It is found in the cell membrane. It carries out the reaction 4 Fe(II)-[cytochrome c] + O2 + 8 H(+)(in) = 4 Fe(III)-[cytochrome c] + 2 H2O + 4 H(+)(out). In Bacillus subtilis (strain 168), this protein is Cytochrome c oxidase subunit 3 (ctaE).